Consider the following 369-residue polypeptide: Putative FAD-dependent monooxygenase YetM (369 aa).

Residues 1 to 32 form the signal peptide; sequence MKHMLIAGGGIGGLSAAISLRKAGFSVTLCEA. Residues Gly-12, 31–32, Val-126, and Asp-285 each bind FAD; that span reads EA.

It depends on FAD as a cofactor.

The sequence is that of Putative FAD-dependent monooxygenase YetM (yetM) from Bacillus subtilis (strain 168).